We begin with the raw amino-acid sequence, 565 residues long: uncharacterized protein (565 aa).

This is an uncharacterized protein from Acanthamoeba polyphaga (Amoeba).